A 380-amino-acid polypeptide reads, in one-letter code: 8-amino-7-oxononanoate synthase (380 aa).

Substrate is bound at residue Arg26. Residue 104–105 (GY) coordinates pyridoxal 5'-phosphate. His129 is a binding site for substrate. Pyridoxal 5'-phosphate contacts are provided by residues Ser175, 200 to 203 (DEAH), and 232 to 235 (TLSK). Lys235 carries the post-translational modification N6-(pyridoxal phosphate)lysine. Thr345 is a binding site for substrate.

Belongs to the class-II pyridoxal-phosphate-dependent aminotransferase family. BioF subfamily. Homodimer. Pyridoxal 5'-phosphate is required as a cofactor.

The catalysed reaction is 6-carboxyhexanoyl-[ACP] + L-alanine + H(+) = (8S)-8-amino-7-oxononanoate + holo-[ACP] + CO2. It participates in cofactor biosynthesis; biotin biosynthesis. Catalyzes the decarboxylative condensation of pimeloyl-[acyl-carrier protein] and L-alanine to produce 8-amino-7-oxononanoate (AON), [acyl-carrier protein], and carbon dioxide. The sequence is that of 8-amino-7-oxononanoate synthase from Mycolicibacterium gilvum (strain PYR-GCK) (Mycobacterium gilvum (strain PYR-GCK)).